The following is a 555-amino-acid chain: Pentatricopeptide repeat-containing protein At2g44880 (555 aa).

12 PPR repeats span residues 41–75, 77–111, 112–142, 143–173, 175–205, 206–240, 241–267, 273–307, 308–342, 343–370, 373–407, and 408–438; these read DSFL…TCFA, DNFT…GFCA, DMYV…MPHR, SEVS…MPHV, DVVI…MTHK, TVIT…NLVS, WNTM…MQAT, DDVT…KLDK, KVKV…QVAS, WNAM…MIEE, DEIT…GLNA, and KIEH…MPFE. The type E motif stretch occupies residues 443–518; that stretch reads ILSSFLSACG…EVGCSLIEIN (76 aa). Positions 519–549 are type E(+) motif; the sequence is YIVSEFISGDTTHPHRRSIHLVLGDLLMHMN.

Belongs to the PPR family. PCMP-E subfamily.

The chain is Pentatricopeptide repeat-containing protein At2g44880 (PCMP-E9) from Arabidopsis thaliana (Mouse-ear cress).